The sequence spans 295 residues: Bifunctional protein FolD (295 aa).

NADP(+) contacts are provided by residues 166-168 (GRS), Thr195, and Val236.

The protein belongs to the tetrahydrofolate dehydrogenase/cyclohydrolase family. Homodimer.

The enzyme catalyses (6R)-5,10-methylene-5,6,7,8-tetrahydrofolate + NADP(+) = (6R)-5,10-methenyltetrahydrofolate + NADPH. The catalysed reaction is (6R)-5,10-methenyltetrahydrofolate + H2O = (6R)-10-formyltetrahydrofolate + H(+). The protein operates within one-carbon metabolism; tetrahydrofolate interconversion. Catalyzes the oxidation of 5,10-methylenetetrahydrofolate to 5,10-methenyltetrahydrofolate and then the hydrolysis of 5,10-methenyltetrahydrofolate to 10-formyltetrahydrofolate. The protein is Bifunctional protein FolD of Syntrophobacter fumaroxidans (strain DSM 10017 / MPOB).